A 410-amino-acid chain; its full sequence is MKDYSKIGDKLVMQRPRRRLEGTAMGATVFDLRPGVGIGPFSIGMPICEAFAQIEQQPNIYDVVHVKYYDEDPLKLDVVISFPDHGFHLRFDPWSQRLRLVEIFDVKRLQMRYATSMIGGPSTLATFVAVYALFGPTFPGIYDKERGIYSLFYPGLSFEFPIPNQYTDCCHDGEAALPLEFPDGTTPVTCRVSIYDNSSDKKVGVGKLMDRASVPPLPPGSLYMEEVHVKPGKELYFTVGGQHMPFGASPQDVWTELGRPCGIHPKQVDQMVIHSASDPRPKTTICGDYFYNYFTRGLDILFDGETHKVKKFVLHTNYPGHADFNSYIKCNFVISAGADAAEANRSGNKITPSTNWDQVKEILGECGPAAIQTQGSTSNPFGSTYVYGYQNVAFEVMKNGHIATITLFQS.

Belongs to the PHAF1 family.

The polypeptide is PHAF1 protein At3g51130 (Arabidopsis thaliana (Mouse-ear cress)).